Reading from the N-terminus, the 81-residue chain is Dermaseptin-S6 (81 aa).

The N-terminal stretch at 1–22 is a signal peptide; the sequence is MDILKKSLFFILFLGLVSLSIS. Residues 22 to 49 are disordered; the sequence is SEEEKRENEDEEDQEDDEQSEEKRGLWS. A propeptide spanning residues 23–45 is cleaved from the precursor; that stretch reads EEEKRENEDEEDQEDDEQSEEKR. Residues 30-41 are compositionally biased toward acidic residues; sequence EDEEDQEDDEQS. Ile78 carries the isoleucine amide modification. A propeptide spanning residues 80-81 is cleaved from the precursor; that stretch reads EQ.

The protein belongs to the frog skin active peptide (FSAP) family. Dermaseptin subfamily. In terms of tissue distribution, expressed by the skin glands.

The protein localises to the secreted. In terms of biological role, antimicrobial peptide. The sequence is that of Dermaseptin-S6 from Phyllomedusa sauvagei (Sauvage's leaf frog).